A 319-amino-acid polypeptide reads, in one-letter code: Acetyl esterase (319 aa).

Positions 91–93 (HGG) match the Involved in the stabilization of the negatively charged intermediate by the formation of the oxyanion hole motif. Residues serine 165, aspartate 262, and histidine 292 contribute to the active site.

This sequence belongs to the 'GDXG' lipolytic enzyme family. As to quaternary structure, homodimer. Interacts with MalT and MelA.

The protein localises to the cytoplasm. Its function is as follows. Displays esterase activity towards short chain fatty esters (acyl chain length of up to 8 carbons). Able to hydrolyze triacetylglycerol (triacetin) and tributyrylglycerol (tributyrin), but not trioleylglycerol (triolein) or cholesterol oleate. Negatively regulates MalT activity by antagonizing maltotriose binding. Inhibits MelA galactosidase activity. This chain is Acetyl esterase, found in Escherichia coli O8 (strain IAI1).